The following is a 127-amino-acid chain: DLECPSGWSSYDRYCYKPFKQEMTWADAERFCSEQAKGRHLLSVETALEASFVDNVLYANKEYLTRYIWIGLRVQNKGQPCSSIYSENLVDPFDCFMVSRDTRLREWFKVDCEQQHSFICKFTRPRR.

Disulfide bonds link Cys4–Cys15, Cys32–Cys120, and Cys95–Cys112. The C-type lectin domain maps to 11–121; the sequence is YDRYCYKPFK…CEQQHSFICK (111 aa).

It belongs to the snaclec family. In terms of assembly, heterodimer of subunits alpha and beta; disulfide-linked. As to expression, expressed by the venom gland.

The protein resides in the secreted. Its function is as follows. Binds to the subunit GPIbalpha (GP1BA) of the platelet GPIb/V/IX receptor system. It inhibits ristocetin- and vWF-induced platelet aggregation in platelet-rich plasma by inhibiting the binding of vWF to GPIbalpha. This chain is Snaclec CHH-B subunit alpha, found in Crotalus horridus (Timber rattlesnake).